The sequence spans 225 residues: 7-cyano-7-deazaguanine synthase (225 aa).

Position 10–20 (10–20 (LSGGIDSATAA)) interacts with ATP. Zn(2+) is bound by residues cysteine 191, cysteine 199, cysteine 202, and cysteine 205.

The protein belongs to the QueC family. Requires Zn(2+) as cofactor.

The catalysed reaction is 7-carboxy-7-deazaguanine + NH4(+) + ATP = 7-cyano-7-deazaguanine + ADP + phosphate + H2O + H(+). It participates in purine metabolism; 7-cyano-7-deazaguanine biosynthesis. Functionally, catalyzes the ATP-dependent conversion of 7-carboxy-7-deazaguanine (CDG) to 7-cyano-7-deazaguanine (preQ(0)). The chain is 7-cyano-7-deazaguanine synthase from Prochlorococcus marinus (strain NATL2A).